Consider the following 181-residue polypeptide: Ferredoxin C 2, chloroplastic (181 aa).

A chloroplast-targeting transit peptide spans Met-1–Glu-44. Residues His-59–Asp-151 enclose the 2Fe-2S ferredoxin-type domain. 4 residues coordinate [2Fe-2S] cluster: Cys-97, Cys-102, Cys-105, and Cys-135.

Belongs to the 2Fe2S plant-type ferredoxin family. [2Fe-2S] cluster is required as a cofactor.

It is found in the plastid. The protein resides in the chloroplast. In terms of biological role, ferredoxins are iron-sulfur proteins that transfer electrons in a wide variety of metabolic reactions. Mediates alternative electron partitioning in conditions of acceptor limitation at photosystem I. This Arabidopsis thaliana (Mouse-ear cress) protein is Ferredoxin C 2, chloroplastic.